We begin with the raw amino-acid sequence, 20 residues long: Short cationic peptide-4c (20 aa).

Residue Glu-20 is modified to Glutamic acid 1-amide.

Expressed by the venom gland.

It is found in the secreted. The sequence is that of Short cationic peptide-4c from Cupiennius salei (American wandering spider).